The primary structure comprises 369 residues: Phenylalanine--tRNA ligase alpha subunit (369 aa).

Glu-270 contacts Mg(2+).

Belongs to the class-II aminoacyl-tRNA synthetase family. Phe-tRNA synthetase alpha subunit type 1 subfamily. As to quaternary structure, tetramer of two alpha and two beta subunits. Mg(2+) is required as a cofactor.

It localises to the cytoplasm. The catalysed reaction is tRNA(Phe) + L-phenylalanine + ATP = L-phenylalanyl-tRNA(Phe) + AMP + diphosphate + H(+). The sequence is that of Phenylalanine--tRNA ligase alpha subunit from Phenylobacterium zucineum (strain HLK1).